Here is a 220-residue protein sequence, read N- to C-terminus: Metalloproteinase inhibitor 2 (220 aa).

The first 26 residues, 1–26, serve as a signal peptide directing secretion; the sequence is MGAAARSLRLALGLLLLATLPRPADA. Position 27 (C27) interacts with Zn(2+). Involved in metalloproteinase-binding regions lie at residues 27–30 and 95–96; these read CSCS and SA. Disulfide bonds link C27–C98, C29–C127, C39–C152, C154–C201, C159–C164, and C172–C193. The region spanning 27 to 152 is the NTR domain; sequence CSCSPVHPQQ…SLNHRYQMGC (126 aa).

The protein belongs to the protease inhibitor I35 (TIMP) family. Interacts (via the C-terminal) with MMP2 (via the C-terminal PEX domain); the interaction inhibits the MMP2 activity. In terms of processing, the activity of TIMP2 is dependent on the presence of disulfide bonds.

Its subcellular location is the secreted. Functionally, complexes with metalloproteinases (such as collagenases) and irreversibly inactivates them by binding to their catalytic zinc cofactor. The sequence is that of Metalloproteinase inhibitor 2 (TIMP2) from Canis lupus familiaris (Dog).